The chain runs to 467 residues: Dihydrolipoyl dehydrogenase 3 (467 aa).

FAD-binding positions include 34-43 (EGRETLGGTC), Lys-52, and Ala-116. Cys-43 and Cys-48 are joined by a disulfide. NAD(+) contacts are provided by residues 182–186 (GAGVI), Glu-205, Val-239, and 272–275 (AIGR). FAD-binding residues include Asp-314 and Ala-322. The active-site Proton acceptor is the His-446.

It belongs to the class-I pyridine nucleotide-disulfide oxidoreductase family. As to quaternary structure, homodimer. FAD serves as cofactor.

Its subcellular location is the cytoplasm. It carries out the reaction N(6)-[(R)-dihydrolipoyl]-L-lysyl-[protein] + NAD(+) = N(6)-[(R)-lipoyl]-L-lysyl-[protein] + NADH + H(+). Functionally, LPD-3 may substitute for lipoamide dehydrogenase of the 2-oxoglutarate dehydrogenase and pyruvate multienzyme complexes when the latter is inactive or missing. The protein is Dihydrolipoyl dehydrogenase 3 (lpd3) of Pseudomonas aeruginosa (strain ATCC 15692 / DSM 22644 / CIP 104116 / JCM 14847 / LMG 12228 / 1C / PRS 101 / PAO1).